We begin with the raw amino-acid sequence, 404 residues long: Peroxisomal biogenesis factor 9 (404 aa).

3 consecutive transmembrane segments (helical) span residues 73–93 (FLFL…SLVF), 94–114 (LLGV…LLMG), and 149–169 (FGLD…FQVV). Positions 180 to 214 (DGQRSQQSQNSGMNVASSSRGRHQLVPDRPGSQLS) are disordered. Residues 181-198 (GQRSQQSQNSGMNVASSS) show a composition bias toward polar residues. The chain crosses the membrane as a helical span at residues 349 to 369 (FFVGLVSWIVDETAACVVFCL).

Its subcellular location is the peroxisome membrane. Its function is as follows. Essential for the import of peroxisomal matrix proteins. This is Peroxisomal biogenesis factor 9 (PEX9) from Yarrowia lipolytica (strain CLIB 122 / E 150) (Yeast).